A 477-amino-acid chain; its full sequence is Ribulose bisphosphate carboxylase large chain (477 aa).

A propeptide spanning residues 1–2 is cleaved from the precursor; that stretch reads MS. Pro3 carries the post-translational modification N-acetylproline. Lys14 carries the post-translational modification N6,N6,N6-trimethyllysine. Asn123 and Thr173 together coordinate substrate. Lys175 functions as the Proton acceptor in the catalytic mechanism. Lys177 lines the substrate pocket. Lys201, Asp203, and Glu204 together coordinate Mg(2+). N6-carboxylysine is present on Lys201. The active-site Proton acceptor is His294. 3 residues coordinate substrate: Arg295, His327, and Ser379.

This sequence belongs to the RuBisCO large chain family. Type I subfamily. Heterohexadecamer of 8 large chains and 8 small chains; disulfide-linked. The disulfide link is formed within the large subunit homodimers. It depends on Mg(2+) as a cofactor. The disulfide bond which can form in the large chain dimeric partners within the hexadecamer appears to be associated with oxidative stress and protein turnover.

It is found in the plastid. It localises to the chloroplast. It catalyses the reaction 2 (2R)-3-phosphoglycerate + 2 H(+) = D-ribulose 1,5-bisphosphate + CO2 + H2O. It carries out the reaction D-ribulose 1,5-bisphosphate + O2 = 2-phosphoglycolate + (2R)-3-phosphoglycerate + 2 H(+). Functionally, ruBisCO catalyzes two reactions: the carboxylation of D-ribulose 1,5-bisphosphate, the primary event in carbon dioxide fixation, as well as the oxidative fragmentation of the pentose substrate in the photorespiration process. Both reactions occur simultaneously and in competition at the same active site. The sequence is that of Ribulose bisphosphate carboxylase large chain from Nicotiana debneyi (Debney's tobacco).